The primary structure comprises 329 residues: Minor capsid protein A1 (329 aa).

The interval 143 to 162 (GPSPVPGPNPDPPLEPPPGT) is disordered. Over residues 145-161 (SPVPGPNPDPPLEPPPG) the composition is skewed to pro residues.

Its subcellular location is the virion. Its function is as follows. Minor capsid protein. The protein is Minor capsid protein A1 of Qbeta virus (strain MX1).